We begin with the raw amino-acid sequence, 508 residues long: H/ACA ribonucleoprotein complex subunit 4 (508 aa).

The disordered stretch occupies residues 1-29 (MADVEVRKEKKKKKIKEEPLDGDDIGTLQ). Aspartate 123 acts as the Nucleophile in catalysis. The region spanning 294–369 (HKRIIMKDSS…VVAKIKRVIM (76 aa)) is the PUA domain. The disordered stretch occupies residues 423 to 508 (AAQEVSPTNG…KDRDRDEAQE (86 aa)). Serine 442 is modified (phosphoserine). Over residues 442–457 (STSSVEETAAAAVSEE) the composition is skewed to low complexity. Phosphothreonine is present on threonine 443. A phosphoserine mark is found at serine 444 and serine 445. A Phosphothreonine modification is found at threonine 449. A Phosphoserine modification is found at serine 455. Position 458 is a phosphothreonine (threonine 458). A compositionally biased stretch (acidic residues) spans 475–485 (EAPEAAEEEAE). Over residues 499–508 (KDRDRDEAQE) the composition is skewed to basic and acidic residues.

The protein belongs to the pseudouridine synthase TruB family. Component of the box H/ACA small nucleolar ribonucleoprotein (H/ACA snoRNP) complex consisting of Nop60B, Gar1, NPH2 and Nop10, and associated with H/ACA-type snoRNAs. Expressed at higher levels in females than in males. As to expression, expressed almost exclusively in females with high levels of expression in the ovary.

Its subcellular location is the nucleus. It localises to the nucleolus. The enzyme catalyses a uridine in RNA = a pseudouridine in RNA. Functionally, catalytic subunit of the box H/ACA small nucleolar ribonucleoprotein (H/ACA snoRNP) complex, which catalyzes pseudouridylation of rRNA. This involves the isomerization of uridine such that the ribose is subsequently attached to C5, instead of the normal N1. Pseudouridine ('psi') residues may serve to stabilize the conformation of rRNAs. Required for ribosome biogenesis; plays a central role in ribosomal RNA processing. H/ACA snoRNP complex-dependent ribosome biogenesis is important in female germline cell differentiation during oogenesis. Essential for viability and female fertility. Required for maintenance of the germline stem cell lineage during spermatogenesis. In Drosophila melanogaster (Fruit fly), this protein is H/ACA ribonucleoprotein complex subunit 4.